A 50-amino-acid polypeptide reads, in one-letter code: Ribosome-inactivating protein lyophyllin (50 aa).

It catalyses the reaction Endohydrolysis of the N-glycosidic bond at one specific adenosine on the 28S rRNA.. In terms of biological role, N-glycosylase that inhibits protein synthesis by depurinating ribosomal rRNA, and thus acts as a ribosomal inactivating protein (RIP). Has adenine polynucleotide glycosidase activity on the poly(A) substrate A30-ssDNA. Inhibits cell-free translation in rabbit reticulocyte lysate system with an IC(50) of 1 nM. May function in the defense response to pathogens. Displays antifungal activity against C.comatus and P.piricola, but not against R.solani, M.arachidicola and C.gossypii. Inhibits mycelial growth in P.piricola with an IC(50) of 2.5 uM. Has cytotoxic activity against the human cancer cell lines Hela, HepG2, and JAR, with IC(50) of 358.8, 489.8, and 926.9 nM respectively. It also inhibits HIV-1 reverse transcriptase activity (IC(50)=7.9 nM) and disrupts mouse embryonic development. The protein is Ribosome-inactivating protein lyophyllin of Lyophyllum shimeji (Hon-shimeji).